The following is a 96-amino-acid chain: Small ribosomal subunit protein bS6 (96 aa).

It belongs to the bacterial ribosomal protein bS6 family.

Binds together with bS18 to 16S ribosomal RNA. In Streptococcus mutans serotype c (strain ATCC 700610 / UA159), this protein is Small ribosomal subunit protein bS6.